The following is a 213-amino-acid chain: Eukaryotic translation initiation factor isoform 4E (213 aa).

Residues 1-37 (MATEVAAAVPPPQLDAEENSGLEAAAAEAKIQPSSGP) form a disordered region. MRNA is bound by residues 56-61 (QGAAWG), lysine 88, and 106-107 (WE). Cysteine 111 and cysteine 150 are disulfide-bonded. MRNA is bound by residues 157–162 (RQRQDK) and 202–205 (KRER).

Belongs to the eukaryotic initiation factor 4E family. In terms of assembly, EIF4F is a multi-subunit complex, the composition of which varies with external and internal environmental conditions. It is composed of at least EIF4A, EIF4E and EIF4G. EIF4E is also known to interact with other partners. In higher plants two isoforms of EIF4F have been identified, named isoform EIF4F and isoform EIF(iso)4F. Isoform EIF4F has subunits p220 and p26, whereas isoform EIF(iso)4F has subunits p82 and p28. (Microbial infection) Interacts with potyvirus viral genome-linked protein (VPg) of plum pox virus (PPV) strain D both in nucleus and cytoplasm; this interaction is possible in susceptible hosts but is impaired in resistant plants. According to the redox status, the Cys-111-Cys-150 disulfide bridge may have a role in regulating protein function by affecting its ability to bind capped mRNA. In terms of tissue distribution, mostly expressed in leaves, flower buds, leaf buds and anthers, to a lower extent in roots, stems and green immature fruit, and, at low levels, in petals.

Its subcellular location is the cytoplasm. The protein localises to the nucleus. Its function is as follows. Component of the protein complex eIF4F, which is involved in the recognition of the mRNA cap, ATP-dependent unwinding of 5'-terminal secondary structure and recruitment of mRNA to the ribosome. Recognizes and binds the 7-methylguanosine-containing mRNA cap during an early step in the initiation of protein synthesis and facilitates ribosome binding by inducing the unwinding of the mRNAs secondary structures. Key component of recessive resistance to potyviruses such as the plum pox virus (PPV) strain D. (Microbial infection) Susceptibility host factor required for viral infection by recruiting viral RNAs to the host ribosomal complex via an interaction with viral genome-linked protein (VPg). The sequence is that of Eukaryotic translation initiation factor isoform 4E from Prunus domestica (Garden plum).